Here is a 273-residue protein sequence, read N- to C-terminus: 2,3,4,5-tetrahydropyridine-2,6-dicarboxylate N-succinyltransferase (273 aa).

Positions 104 and 141 each coordinate substrate.

It belongs to the transferase hexapeptide repeat family. Homotrimer.

Its subcellular location is the cytoplasm. It catalyses the reaction (S)-2,3,4,5-tetrahydrodipicolinate + succinyl-CoA + H2O = (S)-2-succinylamino-6-oxoheptanedioate + CoA. It functions in the pathway amino-acid biosynthesis; L-lysine biosynthesis via DAP pathway; LL-2,6-diaminopimelate from (S)-tetrahydrodipicolinate (succinylase route): step 1/3. This is 2,3,4,5-tetrahydropyridine-2,6-dicarboxylate N-succinyltransferase from Chromobacterium violaceum (strain ATCC 12472 / DSM 30191 / JCM 1249 / CCUG 213 / NBRC 12614 / NCIMB 9131 / NCTC 9757 / MK).